We begin with the raw amino-acid sequence, 495 residues long: Protein FAM83F (495 aa).

Ala-2 is modified (N-acetylalanine). Residues 2–294 (AESQLSCLDE…LYAISEEVNL (293 aa)) are DUF1669. The residue at position 4 (Ser-4) is a Phosphoserine. Disordered stretches follow at residues 341–362 (QQREAGGNVEGQEEGSGGGESA) and 384–495 (PISP…CVIS). Residues 447–458 (PAVPSSMASSPS) are compositionally biased toward low complexity. Ser-477 bears the Phosphoserine mark.

The protein belongs to the FAM83 family. In terms of assembly, directly interacts (via DUF1669) with CSNK1A1 and CSNK1A1L.

The protein localises to the cell membrane. This is Protein FAM83F (Fam83f) from Mus musculus (Mouse).